The sequence spans 311 residues: Aspartate carbamoyltransferase catalytic subunit (311 aa).

The carbamoyl phosphate site is built by R55 and T56. K84 is a binding site for L-aspartate. Carbamoyl phosphate-binding residues include R105, H133, and Q136. 2 residues coordinate L-aspartate: R166 and R229. 2 residues coordinate carbamoyl phosphate: L268 and P269.

The protein belongs to the aspartate/ornithine carbamoyltransferase superfamily. ATCase family. As to quaternary structure, heterododecamer (2C3:3R2) of six catalytic PyrB chains organized as two trimers (C3), and six regulatory PyrI chains organized as three dimers (R2).

It carries out the reaction carbamoyl phosphate + L-aspartate = N-carbamoyl-L-aspartate + phosphate + H(+). It functions in the pathway pyrimidine metabolism; UMP biosynthesis via de novo pathway; (S)-dihydroorotate from bicarbonate: step 2/3. Functionally, catalyzes the condensation of carbamoyl phosphate and aspartate to form carbamoyl aspartate and inorganic phosphate, the committed step in the de novo pyrimidine nucleotide biosynthesis pathway. This Alkaliphilus metalliredigens (strain QYMF) protein is Aspartate carbamoyltransferase catalytic subunit.